The chain runs to 346 residues: Cell division protein ZipA (346 aa).

The Periplasmic segment spans residues 1–6 (MEDLQL). The helical transmembrane segment at 7–27 (VLFVLGAIAIVAVLVHGFWSI) threads the bilayer. At 28–346 (RRQQPKSLKD…DYLHRIRANA (319 aa)) the chain is on the cytoplasmic side. 2 disordered regions span residues 76 to 103 (ANEAHTPEAPAFNPYLKQEAKTQPQPVE) and 121 to 145 (QPDFSLQSPTAKEQHRGPKASRQEP).

Belongs to the ZipA family. Interacts with FtsZ via their C-terminal domains.

The protein localises to the cell inner membrane. Its function is as follows. Essential cell division protein that stabilizes the FtsZ protofilaments by cross-linking them and that serves as a cytoplasmic membrane anchor for the Z ring. Also required for the recruitment to the septal ring of downstream cell division proteins. The protein is Cell division protein ZipA of Shewanella sp. (strain MR-7).